Here is a 126-residue protein sequence, read N- to C-terminus: Histone H2B type 2-B (126 aa).

Low complexity predominate over residues 1–12; sequence MPDPAKSAPAPK. The disordered stretch occupies residues 1–36; it reads MPDPAKSAPAPKKGSKKAVTKVQKKDGKKRKRSRKE. P2 carries the post-translational modification N-acetylproline. Residue K6 is modified to N6-(2-hydroxyisobutyryl)lysine; alternate. Position 6 is an N6-(beta-hydroxybutyryl)lysine; alternate (K6). An N6-acetyllysine; alternate modification is found at K6. K6 bears the N6-butyryllysine; alternate mark. K6 is subject to N6-crotonyllysine; alternate. K6 is modified (N6-lactoyllysine; alternate). A Glycyl lysine isopeptide (Lys-Gly) (interchain with G-Cter in SUMO2); alternate cross-link involves residue K6. Residue S7 is modified to ADP-ribosylserine. K12 is modified (N6-(beta-hydroxybutyryl)lysine; alternate). N6-acetyllysine; alternate occurs at positions 12 and 13. N6-crotonyllysine; alternate is present on residues K12 and K13. N6-lactoyllysine; alternate is present on K12. K13 carries the post-translational modification N6-(2-hydroxyisobutyryl)lysine; alternate. S15 is modified (phosphoserine; by STK4/MST1). 4 positions are modified to N6-acetyllysine; alternate: K16, K17, K21, and K24. An N6-crotonyllysine; alternate mark is found at K16, K17, K21, and K24. 4 positions are modified to N6-lactoyllysine; alternate: K16, K17, K21, and K24. K17 is modified (N6-glutaryllysine; alternate). 2 positions are modified to N6-(2-hydroxyisobutyryl)lysine; alternate: K21 and K24. N6-(beta-hydroxybutyryl)lysine; alternate is present on K21. An N6-butyryllysine; alternate modification is found at K21. Residue K21 forms a Glycyl lysine isopeptide (Lys-Gly) (interchain with G-Cter in SUMO2); alternate linkage. N6-(2-hydroxyisobutyryl)lysine is present on K25. K35 bears the N6-(2-hydroxyisobutyryl)lysine; alternate mark. Residue K35 is modified to N6-(beta-hydroxybutyryl)lysine; alternate. K35 carries the post-translational modification N6-crotonyllysine; alternate. N6-glutaryllysine; alternate is present on K35. K35 is modified (N6-succinyllysine; alternate). K35 participates in a covalent cross-link: Glycyl lysine isopeptide (Lys-Gly) (interchain with G-Cter in ubiquitin); alternate. E36 is modified (polyADP-ribosyl glutamic acid). S37 is subject to Phosphoserine; by AMPK. Residues K44, K47, and K58 each carry the N6-(2-hydroxyisobutyryl)lysine; alternate modification. K44 carries the N6-lactoyllysine; alternate modification. N6-glutaryllysine; alternate is present on residues K44 and K47. Position 47 is an N6-methyllysine; alternate (K47). The residue at position 58 (K58) is an N6,N6-dimethyllysine; alternate. R80 carries the dimethylated arginine modification. Residue K86 is modified to N6-(2-hydroxyisobutyryl)lysine; alternate. N6-acetyllysine; alternate is present on K86. At K86 the chain carries N6-lactoyllysine; alternate. N6,N6,N6-trimethyllysine; alternate is present on K86. 2 positions are modified to omega-N-methylarginine: R87 and R93. Residue K109 is modified to N6-(2-hydroxyisobutyryl)lysine; alternate. K109 carries the N6-(beta-hydroxybutyryl)lysine; alternate modification. N6-lactoyllysine; alternate is present on K109. K109 is subject to N6-glutaryllysine; alternate. K109 bears the N6-methyllysine; alternate mark. S113 carries an O-linked (GlcNAc) serine glycan. Position 116 is a phosphothreonine (T116). An N6-(2-hydroxyisobutyryl)lysine; alternate mark is found at K117 and K121. K117 is modified (N6-(beta-hydroxybutyryl)lysine; alternate). K117 and K121 each carry N6-lactoyllysine; alternate. Residues K117 and K121 each carry the N6-glutaryllysine; alternate modification. 2 positions are modified to N6-succinyllysine; alternate: K117 and K121. Position 117 is an N6-methylated lysine; alternate (K117). A Glycyl lysine isopeptide (Lys-Gly) (interchain with G-Cter in ubiquitin); alternate cross-link involves residue K121.

This sequence belongs to the histone H2B family. The nucleosome is a histone octamer containing two molecules each of H2A, H2B, H3 and H4 assembled in one H3-H4 heterotetramer and two H2A-H2B heterodimers. The octamer wraps approximately 147 bp of DNA. Monoubiquitination at Lys-35 (H2BK34Ub) by the MSL1/MSL2 dimer is required for histone H3 'Lys-4' (H3K4me) and 'Lys-79' (H3K79me) methylation and transcription activation at specific gene loci, such as HOXA9 and MEIS1 loci. Similarly, monoubiquitination at Lys-121 (H2BK120Ub) by the RNF20/40 complex gives a specific tag for epigenetic transcriptional activation and is also prerequisite for histone H3 'Lys-4' and 'Lys-79' methylation. It also functions cooperatively with the FACT dimer to stimulate elongation by RNA polymerase II. H2BK120Ub also acts as a regulator of mRNA splicing: deubiquitination by USP49 is required for efficient cotranscriptional splicing of a large set of exons. In terms of processing, phosphorylated on Ser-15 (H2BS14ph) by STK4/MST1 during apoptosis; which facilitates apoptotic chromatin condensation. Also phosphorylated on Ser-15 in response to DNA double strand breaks (DSBs), and in correlation with somatic hypermutation and immunoglobulin class-switch recombination. Phosphorylation at Ser-37 (H2BS36ph) by AMPK in response to stress promotes transcription. Post-translationally, glcNAcylation at Ser-113 promotes monoubiquitination of Lys-121. It fluctuates in response to extracellular glucose, and associates with transcribed genes. ADP-ribosylated by PARP1 or PARP2 on Ser-7 (H2BS6ADPr) in response to DNA damage. H2BS6ADPr promotes recruitment of CHD1L. Poly ADP-ribosylation on Glu-36 (H2BE35ADPr) by PARP1 regulates adipogenesis: it inhibits phosphorylation at Ser-37 (H2BS36ph), thereby blocking expression of pro-adipogenetic genes. In terms of processing, crotonylation (Kcr) is specifically present in male germ cells and marks testis-specific genes in post-meiotic cells, including X-linked genes that escape sex chromosome inactivation in haploid cells. Crotonylation marks active promoters and enhancers and confers resistance to transcriptional repressors. It is also associated with post-meiotically activated genes on autosomes. Post-translationally, hydroxybutyrylation of histones is induced by starvation. Lactylated in macrophages by EP300/P300 by using lactoyl-CoA directly derived from endogenous or exogenous lactate, leading to stimulates gene transcription.

Its subcellular location is the nucleus. It is found in the chromosome. Core component of nucleosome. Nucleosomes wrap and compact DNA into chromatin, limiting DNA accessibility to the cellular machineries which require DNA as a template. Histones thereby play a central role in transcription regulation, DNA repair, DNA replication and chromosomal stability. DNA accessibility is regulated via a complex set of post-translational modifications of histones, also called histone code, and nucleosome remodeling. The sequence is that of Histone H2B type 2-B from Mus musculus (Mouse).